We begin with the raw amino-acid sequence, 686 residues long: Glycine--tRNA ligase beta subunit (686 aa).

This sequence belongs to the class-II aminoacyl-tRNA synthetase family. In terms of assembly, tetramer of two alpha and two beta subunits.

The protein resides in the cytoplasm. The enzyme catalyses tRNA(Gly) + glycine + ATP = glycyl-tRNA(Gly) + AMP + diphosphate. This is Glycine--tRNA ligase beta subunit from Halothermothrix orenii (strain H 168 / OCM 544 / DSM 9562).